A 239-amino-acid chain; its full sequence is Ribonuclease PH (239 aa).

Phosphate contacts are provided by residues R86 and 124–126; that span reads GTR.

This sequence belongs to the RNase PH family. As to quaternary structure, homohexameric ring arranged as a trimer of dimers.

It catalyses the reaction tRNA(n+1) + phosphate = tRNA(n) + a ribonucleoside 5'-diphosphate. In terms of biological role, phosphorolytic 3'-5' exoribonuclease that plays an important role in tRNA 3'-end maturation. Removes nucleotide residues following the 3'-CCA terminus of tRNAs; can also add nucleotides to the ends of RNA molecules by using nucleoside diphosphates as substrates, but this may not be physiologically important. Probably plays a role in initiation of 16S rRNA degradation (leading to ribosome degradation) during starvation. The protein is Ribonuclease PH of Cupriavidus taiwanensis (strain DSM 17343 / BCRC 17206 / CCUG 44338 / CIP 107171 / LMG 19424 / R1) (Ralstonia taiwanensis (strain LMG 19424)).